Reading from the N-terminus, the 834-residue chain is Phenylalanine--tRNA ligase beta subunit (834 aa).

Positions 48-159 constitute a tRNA-binding domain; sequence GDIERPLVVG…GTAEPGTDAN (112 aa). Residues 411–492 enclose the B5 domain; the sequence is PAPEPIRMDI…RLEGLEQIPS (82 aa). Residues Asp470, Asp476, Glu479, and Glu480 each contribute to the Mg(2+) site. The 94-residue stretch at 740-833 folds into the FDX-ACB domain; sequence SPFPAVLQDV…AADAVGAVLR (94 aa).

The protein belongs to the phenylalanyl-tRNA synthetase beta subunit family. Type 1 subfamily. Tetramer of two alpha and two beta subunits. Requires Mg(2+) as cofactor.

The protein resides in the cytoplasm. It catalyses the reaction tRNA(Phe) + L-phenylalanine + ATP = L-phenylalanyl-tRNA(Phe) + AMP + diphosphate + H(+). This is Phenylalanine--tRNA ligase beta subunit from Nocardia farcinica (strain IFM 10152).